We begin with the raw amino-acid sequence, 382 residues long: Mannitol-1-phosphate 5-dehydrogenase (382 aa).

3-14 (AVHFGAGNIGRG) is a binding site for NAD(+).

The protein belongs to the mannitol dehydrogenase family.

It carries out the reaction D-mannitol 1-phosphate + NAD(+) = beta-D-fructose 6-phosphate + NADH + H(+). The protein is Mannitol-1-phosphate 5-dehydrogenase of Aliivibrio salmonicida (strain LFI1238) (Vibrio salmonicida (strain LFI1238)).